The primary structure comprises 219 residues: Protein-L-isoaspartate O-methyltransferase (219 aa).

Residue Ser66 is part of the active site.

Belongs to the methyltransferase superfamily. L-isoaspartyl/D-aspartyl protein methyltransferase family.

The protein resides in the cytoplasm. It carries out the reaction [protein]-L-isoaspartate + S-adenosyl-L-methionine = [protein]-L-isoaspartate alpha-methyl ester + S-adenosyl-L-homocysteine. Catalyzes the methyl esterification of L-isoaspartyl residues in peptides and proteins that result from spontaneous decomposition of normal L-aspartyl and L-asparaginyl residues. It plays a role in the repair and/or degradation of damaged proteins. This is Protein-L-isoaspartate O-methyltransferase from Xanthobacter autotrophicus (strain ATCC BAA-1158 / Py2).